Reading from the N-terminus, the 90-residue chain is UPF0237 protein BL1209.1 (90 aa).

The 75-residue stretch at 5 to 79 (IITVVGQDTV…DDIGVRIRCQ (75 aa)) folds into the ACT domain.

This sequence belongs to the UPF0237 family.

The sequence is that of UPF0237 protein BL1209.1 from Bifidobacterium longum (strain NCC 2705).